Here is a 363-residue protein sequence, read N- to C-terminus: Spermatogenesis-associated protein 22 (363 aa).

4 stretches are compositionally biased toward polar residues: residues 1-12 (MKRSLNENSARS), 30-48 (QPLT…TPSD), 98-108 (IQSNTGRSQGG), and 140-157 (NDGK…QQKQ). Disordered stretches follow at residues 1–51 (MKRS…DNYD), 98–127 (IQSN…NKND), and 140–170 (NDGK…SRNK).

Component of a multiprotein complex with MEIOB and RPA2. Interacts with MEIOB. Interacts with the complex BRME1:HSF2BP:BRCA2. In terms of tissue distribution, highly expressed in adult testis.

The protein resides in the chromosome. Its function is as follows. Meiosis-specific protein required for homologous recombination in meiosis I. The polypeptide is Spermatogenesis-associated protein 22 (Homo sapiens (Human)).